Consider the following 145-residue polypeptide: CBS domain-containing protein DDB_G0289609 (145 aa).

2 CBS domains span residues 9 to 66 (MSKS…FLPE) and 84 to 141 (MKQN…LEPV).

The polypeptide is CBS domain-containing protein DDB_G0289609 (Dictyostelium discoideum (Social amoeba)).